A 514-amino-acid polypeptide reads, in one-letter code: Maturase K (514 aa).

Belongs to the intron maturase 2 family. MatK subfamily.

It localises to the plastid. Its subcellular location is the chloroplast. Its function is as follows. Usually encoded in the trnK tRNA gene intron. Probably assists in splicing its own and other chloroplast group II introns. This chain is Maturase K, found in Zamia integrifolia (Coontie).